The primary structure comprises 579 residues: Arginine--tRNA ligase (579 aa).

The short motif at 123–133 (ANPTGPVHVGR) is the 'HIGH' region element.

The protein belongs to the class-I aminoacyl-tRNA synthetase family.

Its subcellular location is the cytoplasm. The catalysed reaction is tRNA(Arg) + L-arginine + ATP = L-arginyl-tRNA(Arg) + AMP + diphosphate. The polypeptide is Arginine--tRNA ligase (Haloarcula marismortui (strain ATCC 43049 / DSM 3752 / JCM 8966 / VKM B-1809) (Halobacterium marismortui)).